We begin with the raw amino-acid sequence, 653 residues long: Elongation factor 4 (653 aa).

The disordered stretch occupies residues 1 to 30 (MRTPCSQHRRDRPSAIGSQLPDADTLDTRQ). Residues 50-231 (AQIRNFCIIA…EVVRQVPPPQ (182 aa)) form the tr-type G domain. Residues 62–67 (DHGKST) and 178–181 (NKID) contribute to the GTP site.

Belongs to the TRAFAC class translation factor GTPase superfamily. Classic translation factor GTPase family. LepA subfamily.

The protein resides in the cell membrane. It catalyses the reaction GTP + H2O = GDP + phosphate + H(+). Functionally, required for accurate and efficient protein synthesis under certain stress conditions. May act as a fidelity factor of the translation reaction, by catalyzing a one-codon backward translocation of tRNAs on improperly translocated ribosomes. Back-translocation proceeds from a post-translocation (POST) complex to a pre-translocation (PRE) complex, thus giving elongation factor G a second chance to translocate the tRNAs correctly. Binds to ribosomes in a GTP-dependent manner. The sequence is that of Elongation factor 4 from Mycobacterium bovis (strain ATCC BAA-935 / AF2122/97).